The sequence spans 217 residues: Glycosylphosphatidylinositol anchor biosynthesis protein 11 (217 aa).

The next 2 membrane-spanning stretches (helical) occupy residues 45 to 65 (TWLT…KVFN) and 68 to 88 (NTAE…IFQF). N-linked (GlcNAc...) asparagine glycosylation is present at N102. 4 helical membrane-spanning segments follow: residues 107–127 (AISI…IILF), 134–154 (LLWE…PAVY), 169–189 (YFIL…LDWD), and 197–217 (IPIV…GAYL).

The protein belongs to the PIGF family.

Its subcellular location is the endoplasmic reticulum membrane. It functions in the pathway glycolipid biosynthesis; glycosylphosphatidylinositol-anchor biosynthesis. Its function is as follows. Acts in the GPI biosynthetic pathway between GlcNAc-PI synthesis and GPI transfer to protein. In Candida glabrata (strain ATCC 2001 / BCRC 20586 / JCM 3761 / NBRC 0622 / NRRL Y-65 / CBS 138) (Yeast), this protein is Glycosylphosphatidylinositol anchor biosynthesis protein 11 (GPI11).